Consider the following 71-residue polypeptide: Protein SlyX homolog (71 aa).

Belongs to the SlyX family.

The sequence is that of Protein SlyX homolog from Azotobacter vinelandii (strain DJ / ATCC BAA-1303).